The primary structure comprises 330 residues: MASINLIKSLKLYKEKIWSFDFSQGILATGSTDRKIKLVSVKYDDFTLIDVLDETAHKKAIRSVAWRPHTSLLAAGSFDSTVSIWAKEESADRTFEMDLLAIIEGHENEVKGVAWSNDGYYLATCSRDKSVWIWETDESGEEYECISVLQEHSQDVKHVIWHPSEALLASSSYDDTVRIWKDYDDDWECVAVLNGHEGTVWSSDFDKTEGVFRLCSGSDDSTVRVWKYMGDDEDDQQEWVCEAILPDVHKRQVYNVAWGFNGLIASVGADGVLAVYEEVDGEWKVFAKRALCHGVYEINVVKWLELNGKTILATGGDDGIVNFWSLEKAA.

WD repeat units follow at residues 12–53 (LYKE…DVLD), 56–95 (AHKK…DRTF), 105–144 (GHEN…EEYE), 151–190 (EHSQ…WECV), 195–236 (GHEG…EDDQ), 248–286 (VHKR…WKVF), and 292–330 (CHGV…EKAA).

The protein belongs to the WD repeat CIA1 family. In terms of assembly, interacts with NAR1.

It localises to the cytoplasm. The protein resides in the nucleus. Its function is as follows. Essential component of the cytosolic iron-sulfur (Fe/S) protein assembly machinery. Required for the maturation of extramitochondrial Fe/S proteins. This is Cytosolic iron-sulfur protein assembly protein 1 from Saccharomyces cerevisiae (strain ATCC 204508 / S288c) (Baker's yeast).